We begin with the raw amino-acid sequence, 263 residues long: Small ribosomal subunit protein eS4, Y isoform 1 (263 aa).

In terms of domain architecture, S4 RNA-binding spans 42–104 (LPLIIFLRNR…TGEHFRLVYD (63 aa)).

Belongs to the eukaryotic ribosomal protein eS4 family.

In Monodelphis domestica (Gray short-tailed opossum), this protein is Small ribosomal subunit protein eS4, Y isoform 1 (RPS4Y1).